Consider the following 311-residue polypeptide: GTP cyclohydrolase MptA (311 aa).

This sequence belongs to the GTP cyclohydrolase IV family. As to quaternary structure, homodimer. Fe(2+) is required as a cofactor.

It catalyses the reaction GTP + H2O = 7,8-dihydroneopterin 2',3'-cyclic phosphate + formate + diphosphate + H(+). Its pathway is cofactor biosynthesis; 5,6,7,8-tetrahydromethanopterin biosynthesis. Its function is as follows. Converts GTP to 7,8-dihydro-D-neopterin 2',3'-cyclic phosphate, the first intermediate in the biosynthesis of coenzyme methanopterin. The protein is GTP cyclohydrolase MptA of Halobacterium salinarum (strain ATCC 29341 / DSM 671 / R1).